The primary structure comprises 411 residues: Squalene synthase (411 aa).

The next 2 helical transmembrane spans lie at 281–301 and 388–408; these read SIFR…AMCY and SPVL…QLSG.

Belongs to the phytoene/squalene synthase family. Mg(2+) serves as cofactor.

It is found in the endoplasmic reticulum membrane. The enzyme catalyses 2 (2E,6E)-farnesyl diphosphate + NADPH + H(+) = squalene + 2 diphosphate + NADP(+). It catalyses the reaction 2 (2E,6E)-farnesyl diphosphate + NADH + H(+) = squalene + 2 diphosphate + NAD(+). The protein operates within terpene metabolism; lanosterol biosynthesis; lanosterol from farnesyl diphosphate: step 1/3. The polypeptide is Squalene synthase (Nicotiana benthamiana).